Here is a 237-residue protein sequence, read N- to C-terminus: Orotidine 5'-phosphate decarboxylase (237 aa).

Residues aspartate 10, lysine 33, 60–69, threonine 124, arginine 186, glutamine 195, glycine 215, and arginine 216 each bind substrate; that span reads DLKLHDIPNT. Lysine 62 acts as the Proton donor in catalysis.

The protein belongs to the OMP decarboxylase family. Type 1 subfamily. In terms of assembly, homodimer.

The enzyme catalyses orotidine 5'-phosphate + H(+) = UMP + CO2. Its pathway is pyrimidine metabolism; UMP biosynthesis via de novo pathway; UMP from orotate: step 2/2. Functionally, catalyzes the decarboxylation of orotidine 5'-monophosphate (OMP) to uridine 5'-monophosphate (UMP). This Lactiplantibacillus plantarum (strain ATCC BAA-793 / NCIMB 8826 / WCFS1) (Lactobacillus plantarum) protein is Orotidine 5'-phosphate decarboxylase.